Reading from the N-terminus, the 368-residue chain is MSILEKVQPIETMLPERYYTMSTENMEKRVREIKEKMGGKLFIPGHHYQKDEVVQFSDAAGDSLQLAQVAASNKEAKYIVFCGVHFMAETADMLTTDDQIVILPDMRAGCSMADMADIEQTERAWKELMKLFGDTMIPLTYVNSTAAIKAFCGRNGGATVTSSNAKQMVSWAFTQKERLVFLPDQHLGRNTAYDLGIPLDKMAVWDPHTDSLEYDGDIEEIQVILWKGHCSVHQNFTVKNIENVRKNHPDMNIIVHPECCYEVVAASDYAGSTKYIIDMIESAPSGSKWAIGTEMNLVNRIIQQHPDKEIVSLNPFMCPCLTMNRIDLPHLLWALETIERGEEINVISVDKQVTEEAVLALNRMLERV.

Iminosuccinate contacts are provided by His-46 and Ser-63. A [4Fe-4S] cluster-binding site is contributed by Cys-110. Iminosuccinate-binding positions include 141-143 (YVN) and Ser-162. Cys-230 serves as a coordination point for [4Fe-4S] cluster. Residues 256–258 (HPE) and Thr-273 contribute to the iminosuccinate site. [4Fe-4S] cluster is bound at residue Cys-320.

Belongs to the quinolinate synthase family. Type 3 subfamily. The cofactor is [4Fe-4S] cluster.

It is found in the cytoplasm. The enzyme catalyses iminosuccinate + dihydroxyacetone phosphate = quinolinate + phosphate + 2 H2O + H(+). It participates in cofactor biosynthesis; NAD(+) biosynthesis; quinolinate from iminoaspartate: step 1/1. In terms of biological role, catalyzes the condensation of iminoaspartate with dihydroxyacetone phosphate to form quinolinate. This Bacillus cereus (strain Q1) protein is Quinolinate synthase.